The primary structure comprises 124 residues: Ribosome-binding factor A (124 aa).

This sequence belongs to the RbfA family. Monomer. Binds 30S ribosomal subunits, but not 50S ribosomal subunits or 70S ribosomes.

The protein resides in the cytoplasm. Its function is as follows. One of several proteins that assist in the late maturation steps of the functional core of the 30S ribosomal subunit. Associates with free 30S ribosomal subunits (but not with 30S subunits that are part of 70S ribosomes or polysomes). Required for efficient processing of 16S rRNA. May interact with the 5'-terminal helix region of 16S rRNA. This Thiobacillus denitrificans (strain ATCC 25259 / T1) protein is Ribosome-binding factor A.